Here is a 486-residue protein sequence, read N- to C-terminus: Cardiolipin synthase A (486 aa).

The next 2 membrane-spanning stretches (helical) occupy residues 3 to 23 (TFYT…IAGV) and 38 to 58 (MAWL…YLSF). PLD phosphodiesterase domains follow at residues 219–246 (MDLR…VDPR) and 399–426 (EGGL…DMRS). Residues His-224, Lys-226, Asp-231, His-404, Lys-406, and Asp-411 contribute to the active site.

It belongs to the phospholipase D family. Cardiolipin synthase subfamily. ClsA sub-subfamily.

It is found in the cell inner membrane. The enzyme catalyses 2 a 1,2-diacyl-sn-glycero-3-phospho-(1'-sn-glycerol) = a cardiolipin + glycerol. Functionally, catalyzes the reversible phosphatidyl group transfer from one phosphatidylglycerol molecule to another to form cardiolipin (CL) (diphosphatidylglycerol) and glycerol. The polypeptide is Cardiolipin synthase A (Yersinia pseudotuberculosis serotype O:3 (strain YPIII)).